The sequence spans 256 residues: Trypsin, alkaline A (256 aa).

The signal sequence occupies residues 1 to 17; that stretch reads MRLFLALLALGFAAVAA. A propeptide spans 18–24 (activation peptide); it reads VPAYPQR. The region spanning 25-256 is the Peptidase S1 domain; sequence IVGGSTTTIQ…RFANWIRNNS (232 aa). An intrachain disulfide couples Cys-55 to Cys-71. Active-site charge relay system residues include His-70 and Asp-115. Cystine bridges form between Cys-180–Cys-197 and Cys-209–Cys-233. The active-site Charge relay system is Ser-213.

It belongs to the peptidase S1 family. As to expression, midgut.

It localises to the secreted. Its subcellular location is the extracellular space. It carries out the reaction Preferential cleavage: Arg-|-Xaa, Lys-|-Xaa.. The sequence is that of Trypsin, alkaline A from Manduca sexta (Tobacco hawkmoth).